We begin with the raw amino-acid sequence, 197 residues long: Small ribosomal subunit protein uS4B (197 aa).

In terms of domain architecture, S4 RNA-binding spans 88-150 (SRLDNMVYRM…SRKTEMFVNN (63 aa)).

Belongs to the universal ribosomal protein uS4 family. In terms of assembly, part of the 30S ribosomal subunit. Contacts protein S5. The interaction surface between S4 and S5 is involved in control of translational fidelity.

Functionally, one of the primary rRNA binding proteins, it binds directly to 16S rRNA where it nucleates assembly of the body of the 30S subunit. In terms of biological role, with S5 and S12 plays an important role in translational accuracy. In Clostridium perfringens (strain ATCC 13124 / DSM 756 / JCM 1290 / NCIMB 6125 / NCTC 8237 / Type A), this protein is Small ribosomal subunit protein uS4B.